A 387-amino-acid chain; its full sequence is S-adenosylmethionine synthase (387 aa).

ATP is bound at residue histidine 16. A Mg(2+)-binding site is contributed by aspartate 18. Glutamate 44 contacts K(+). Glutamate 57 and glutamine 100 together coordinate L-methionine. Residues 100 to 110 (QSPDIAQGVDR) are flexible loop. ATP is bound by residues 167–169 (DAK), 232–233 (RF), aspartate 241, 247–248 (RK), alanine 264, and lysine 268. Aspartate 241 lines the L-methionine pocket. Lysine 272 serves as a coordination point for L-methionine.

This sequence belongs to the AdoMet synthase family. As to quaternary structure, homotetramer; dimer of dimers. The cofactor is Mg(2+). K(+) serves as cofactor.

It localises to the cytoplasm. The enzyme catalyses L-methionine + ATP + H2O = S-adenosyl-L-methionine + phosphate + diphosphate. The protein operates within amino-acid biosynthesis; S-adenosyl-L-methionine biosynthesis; S-adenosyl-L-methionine from L-methionine: step 1/1. Its function is as follows. Catalyzes the formation of S-adenosylmethionine (AdoMet) from methionine and ATP. The overall synthetic reaction is composed of two sequential steps, AdoMet formation and the subsequent tripolyphosphate hydrolysis which occurs prior to release of AdoMet from the enzyme. This is S-adenosylmethionine synthase from Cupriavidus necator (strain ATCC 17699 / DSM 428 / KCTC 22496 / NCIMB 10442 / H16 / Stanier 337) (Ralstonia eutropha).